A 149-amino-acid chain; its full sequence is D-aminoacyl-tRNA deacylase (149 aa).

The Gly-cisPro motif, important for rejection of L-amino acids motif lies at 137-138 (GP).

Belongs to the DTD family. In terms of assembly, homodimer.

The protein resides in the cytoplasm. The enzyme catalyses glycyl-tRNA(Ala) + H2O = tRNA(Ala) + glycine + H(+). It carries out the reaction a D-aminoacyl-tRNA + H2O = a tRNA + a D-alpha-amino acid + H(+). An aminoacyl-tRNA editing enzyme that deacylates mischarged D-aminoacyl-tRNAs. Also deacylates mischarged glycyl-tRNA(Ala), protecting cells against glycine mischarging by AlaRS. Acts via tRNA-based rather than protein-based catalysis; rejects L-amino acids rather than detecting D-amino acids in the active site. By recycling D-aminoacyl-tRNA to D-amino acids and free tRNA molecules, this enzyme counteracts the toxicity associated with the formation of D-aminoacyl-tRNA entities in vivo and helps enforce protein L-homochirality. The chain is D-aminoacyl-tRNA deacylase from Thermosipho africanus (strain TCF52B).